The following is a 457-amino-acid chain: Putative HD domain-containing protein L394 (457 aa).

An HD domain is found at 65–206 (RLEHSIGVYD…GIDVDKFDYL (142 aa)).

This chain is Putative HD domain-containing protein L394, found in Acanthamoeba polyphaga mimivirus (APMV).